Here is a 156-residue protein sequence, read N- to C-terminus: Small ribosomal subunit protein uS7 (156 aa).

It belongs to the universal ribosomal protein uS7 family. In terms of assembly, part of the 30S ribosomal subunit. Contacts proteins S9 and S11.

One of the primary rRNA binding proteins, it binds directly to 16S rRNA where it nucleates assembly of the head domain of the 30S subunit. Is located at the subunit interface close to the decoding center, probably blocks exit of the E-site tRNA. This is Small ribosomal subunit protein uS7 from Vibrio cholerae serotype O1 (strain ATCC 39315 / El Tor Inaba N16961).